Consider the following 246-residue polypeptide: Deoxycytidylate 5-hydroxymethyltransferase (246 aa).

Cys-148 is an active-site residue.

This sequence belongs to the thymidylate synthase family.

The catalysed reaction is dCMP + (6R)-5,10-methylene-5,6,7,8-tetrahydrofolate + H2O = 5-hydroxymethyl-dCMP + (6S)-5,6,7,8-tetrahydrofolate. The chain is Deoxycytidylate 5-hydroxymethyltransferase (42) from Enterobacteria phage T4 (Bacteriophage T4).